The sequence spans 490 residues: Flap endonuclease 1 (490 aa).

The segment at 1–106 (MGIKGLTKFL…DELTKRDERR (106 aa)) is N-domain. Residue D34 participates in Mg(2+) binding. DNA contacts are provided by R47 and R72. Mg(2+)-binding residues include D88, E160, E162, D181, and D183. Residues 124–266 (LIKKQSVRTI…STAYKLLKKY (143 aa)) form an I-domain region. Residue E160 participates in DNA binding. Residues G244 and D246 each contribute to the DNA site. D246 serves as a coordination point for Mg(2+). The interaction with PCNA stretch occupies residues 351–359 (SQTCLDGFF). Disordered regions lie at residues 364–396 (NERK…SLSC) and 421–490 (SSQA…SDED). Positions 430–442 (ENSSEAPNQSSEI) are enriched in polar residues. A compositionally biased stretch (basic and acidic residues) spans 443–454 (KVNKIEENKDSE). The segment covering 455–469 (SSTVENTPSLQTKSP) has biased composition (polar residues).

The protein belongs to the XPG/RAD2 endonuclease family. FEN1 subfamily. As to quaternary structure, interacts with PCNA. Three molecules of FEN1 bind to one PCNA trimer with each molecule binding to one PCNA monomer. PCNA stimulates the nuclease activity without altering cleavage specificity. The cofactor is Mg(2+). Phosphorylated. Phosphorylation upon DNA damage induces relocalization to the nuclear plasma.

The protein resides in the nucleus. The protein localises to the nucleolus. It is found in the nucleoplasm. It localises to the mitochondrion. Structure-specific nuclease with 5'-flap endonuclease and 5'-3' exonuclease activities involved in DNA replication and repair. During DNA replication, cleaves the 5'-overhanging flap structure that is generated by displacement synthesis when DNA polymerase encounters the 5'-end of a downstream Okazaki fragment. It enters the flap from the 5'-end and then tracks to cleave the flap base, leaving a nick for ligation. Also involved in the long patch base excision repair (LP-BER) pathway, by cleaving within the apurinic/apyrimidinic (AP) site-terminated flap. Acts as a genome stabilization factor that prevents flaps from equilibrating into structures that lead to duplications and deletions. Also possesses 5'-3' exonuclease activity on nicked or gapped double-stranded DNA, and exhibits RNase H activity. Also involved in replication and repair of rDNA and in repairing mitochondrial DNA. The polypeptide is Flap endonuclease 1 (Cryptosporidium parvum (strain Iowa II)).